Consider the following 330-residue polypeptide: Transcription factor TGA5 (330 aa).

The segment covering 1–13 has biased composition (polar residues); it reads MGDTSPRTSVSTD. Residues 1-64 are disordered; that stretch reads MGDTSPRTSV…REAARKSRLR (64 aa). Over residues 35–47 the composition is skewed to basic and acidic residues; the sequence is SSDRSKSKMDQKT. The bZIP domain occupies 44-107; that stretch reads DQKTLRRLAQ…SSGDQAHSTA (64 aa). 2 coiled-coil regions span residues 45–98 and 211–244; these read QKTL…FISS and EQQS…SLAD. The segment at 46–66 is basic motif; that stretch reads KTLRRLAQNREAARKSRLRKK. Residues 72–86 are leucine-zipper; that stretch reads LENSRLKLTQLEQEL. Residues 111–327 enclose the DOG1 domain; it reads AMAFDVEYRR…RALSSLWLAR (217 aa).

This sequence belongs to the bZIP family. In terms of assembly, binds DNA as a dimer. Interaction with the Dof domain protein OBP1 enhances the binding to the ocs element. Interacts with NPR1, NPR3 and NPR4. As to expression, predominantly expressed in roots.

It is found in the nucleus. Its function is as follows. Transcriptional activator that binds specifically to the DNA sequence 5'-TGACG-3'. Recognizes ocs elements like the as-1 motif of the cauliflower mosaic virus 35S promoter. Binding to the as-1-like cis elements mediate auxin- and salicylic acid-inducible transcription. May be involved in the induction of the systemic acquired resistance (SAR) via its interaction with NPR1. Could also bind to the Hex-motif (5'-TGACGTGG-3') another cis-acting element found in plant histone promoters. In Arabidopsis thaliana (Mouse-ear cress), this protein is Transcription factor TGA5 (TGA5).